We begin with the raw amino-acid sequence, 782 residues long: MGKRDRADRDKKKSRKRHYEDEEDDEEDAPGNDPQEAVPSAAGKQVDESGTKVDEYGAKDYRLQMPLKDDHTSRPLWVAPDGHIFLEAFSPVYKYAQDFLVAIAESVCRPTHVHEYKLTAYSLYAAVSVGLQTSDITEYLRKLSKTGVPDGIMQFIKLCTVSYGKVKLVLKHNRYFVESSHPDVIQHLLQDPVIRECRLRNSEGEATELITETFTSKSAISKTAESSGGPSTSRVTDPQGKSDIPMDLFDFYEQMDKDEEEEEETQTVSFEVKQEMIEELQKRCIHLEYPLLAEYDFRNDSVNPDINIDLKPTAVLRPYQEKSLRKMFGNGRARSGVIVLPCGAGKSLVGVTAACTVRKRCLVLGNSAVSVEQWKAQFKMWSTIDDSQICRFTSDAKDKPIGCSVAISTYSMLGHTTKRSWEAERVMEWLKTQEWGLMILDEVHTIPAKMFRRVLTIVQAHCKLGLTATLVREDDKIVDLNFLIGPKLYEANWMELQNNGYIAKVQCAEVWCPMSPEFYREYVAIKTKKRILLYTMNPNKFRACQFLIKFHERRNDKIIVFADNVFALKEYAIRLNKPYIYGPTSQGERMQILQNFKHNPKINTIFISKVGDTSFDLPEANVLIQISSHGGSRRQEAQRLGRVLRAKKGMVAEEYNAFFYSLVSQDTQEMAYSTKRQRFLVDQGYSFKVITKLAGMEEEDLAFSTKEEQQQLLQKVLAATDLDAEEEVVAGEFGSRSSQASRRFGTMSSMSGADDTVYMEYHSSRSKAPSKHVHPLFKRFRK.

The span at 1 to 11 shows a compositional bias: basic and acidic residues; sequence MGKRDRADRDK. Disordered regions lie at residues 1 to 51 and 218 to 241; these read MGKR…ESGT and SAISKTAESSGGPSTSRVTDPQGK. The Nuclear localization signal motif lies at 6 to 18; it reads RADRDKKKSRKRH. Positions 21–30 are enriched in acidic residues; it reads DEEDDEEDAP. Residues 218–236 are compositionally biased toward polar residues; sequence SAISKTAESSGGPSTSRVT. The Helicase ATP-binding domain occupies 327–488; it reads MFGNGRARSG…DLNFLIGPKL (162 aa). 340–347 provides a ligand contact to ATP; the sequence is LPCGAGKS. A DEVH box motif is present at residues 441-444; that stretch reads DEVH. The Helicase C-terminal domain occupies 542 to 702; the sequence is RACQFLIKFH…LAGMEEEDLA (161 aa). A Phosphoserine modification is found at Ser686. Ser751 is modified (phosphoserine; by CK2).

Belongs to the helicase family. RAD25/XPB subfamily. As to quaternary structure, component of the 7-subunit TFIIH core complex composed of XPB/ERCC3, XPD/ERCC2, GTF2H1, GTF2H2, GTF2H3, GTF2H4 and GTF2H5, which is active in NER. The core complex associates with the 3-subunit CDK-activating kinase (CAK) module composed of CCNH/cyclin H, CDK7 and MNAT1 to form the 10-subunit holoenzyme (holo-TFIIH) active in transcription. Interacts with PUF60. Interacts with ATF7IP. Interacts with KAT2A; leading to KAT2A recruitment to promoters and acetylation of histones. Part of TBP-based Pol II pre-initiation complex (PIC), in which Pol II core assembles with general transcription factors and other specific initiation factors including GTF2E1, GTF2E2, GTF2F1, GTF2F2, TCEA1, ERCC2, ERCC3, GTF2H2, GTF2H3, GTF2H4, GTF2H5, GTF2A1, GTF2A2, GTF2B and TBP; this large multi-subunit PIC complex mediates DNA unwinding and targets Pol II core to the transcription start site where the first phosphodiester bond forms. Phosphorylation on Ser-751 by CK2 controls the 5'-excision activity of ERCC1-XPF endonuclease; phosphorylated protein inhibits the excision activity and thus NER. Dephosphorylation reactivates the 5'-excision step. Phosphorylation has no effect on transcription or the 3'-5' helicase activity.

It is found in the nucleus. The catalysed reaction is Couples ATP hydrolysis with the unwinding of duplex DNA by translocating in the 3'-5' direction.. The enzyme catalyses ATP + H2O = ADP + phosphate + H(+). Phosphorylation on Ser-751 by CK2 controls the 5'-excision activity of ERCC1-XPF endonuclease; phosphorylated protein inhibits the excision activity and thus NER. ATPase activity is stimulated by TFIIH subunit p52 (GTF2H4). DNA translocase activity by this subunit in TFIIH is stimulated by XPA, ERCC5/XPG and XFP plus ERCC1. Its function is as follows. ATP-dependent 3'-5' DNA helicase/translocase; binds dsDNA rather than ssDNA, unzipping it in a translocase rather than classical helicase activity. Component of the general transcription and DNA repair factor IIH (TFIIH) core complex. When complexed to CDK-activating kinase (CAK), involved in RNA transcription by RNA polymerase II. The ATPase activity of XPB/ERCC3, but not its helicase activity, is required for DNA opening; it may wrap around the damaged DNA wedging it open, causing localized melting and twisting that allows XPD/ERCC2 helicase to anchor. The ATP-dependent helicase activity of XPB/ERCC3 may be required for promoter escape. Also involved in transcription-coupled nucleotide excision repair (NER) of damaged DNA. In NER, TFIIH acts by opening DNA around the lesion to allow the excision of the damaged oligonucleotide and its replacement by a new DNA fragment. The structure of the TFIIH transcription complex differs from the NER-TFIIH complex; large movements by XPD/ERCC2 and XPB/ERCC3 are stabilized by XPA. The sequence is that of General transcription and DNA repair factor IIH helicase/translocase subunit XPB (ERCC3) from Pongo abelii (Sumatran orangutan).